Consider the following 404-residue polypeptide: High affinity immunoglobulin gamma Fc receptor I (404 aa).

The N-terminal stretch at 1–24 (MILTSFGDDMWLLTTLLLWVPVGG) is a signal peptide. Residues 25 to 297 (EVVNATKAVI…QVLGPQSSAP (273 aa)) are Extracellular-facing. Residues Asn-28, Asn-48, Asn-69, Asn-168, and Asn-249 are each glycosylated (N-linked (GlcNAc...) asparagine). 3 Ig-like C2-type domains span residues 32–111 (AVIT…LQIH), 117–194 (LQAS…SITV), and 201–286 (PVLR…PELE). 3 disulfide bridges follow: Cys-53–Cys-95, Cys-134–Cys-177, and Cys-221–Cys-269. A helical membrane pass occupies residues 298 to 320 (VWFHILFYLSVGIMFSLNTVLYV). Residues 321-342 (KIHRLQREKKYNLEVPLVSEQG) form an interaction with EPB41L2 region. Over 321–404 (KIHRLQREKK…DSTGAQTSQS (84 aa)) the chain is Cytoplasmic. The segment at 346-404 (NSFQQVRSDGVYEEVTATASQTTPKEAPDGPRSSVGDCGPEQPEPLPPSDSTGAQTSQS) is disordered. The residue at position 347 (Ser-347) is a Phosphoserine. Thr-368 carries the phosphothreonine modification. Positions 394 to 404 (SDSTGAQTSQS) are enriched in polar residues.

Belongs to the immunoglobulin superfamily. FCGR1 family. In terms of assembly, interacts with FCERG1; forms a functional signaling complex. Interacts with FLNA; prevents FCGR1A degradation. Interacts with EPB41L2, LAT and PPL. Interacts with HCK and LYN. In terms of processing, N-glycosylated. Post-translationally, phosphorylated on serine residues. As to expression, macrophage-specific.

The protein localises to the cell membrane. Its function is as follows. High affinity receptor for the Fc region of immunoglobulins gamma. Functions in both innate and adaptive immune responses. The sequence is that of High affinity immunoglobulin gamma Fc receptor I (Fcgr1) from Mus musculus (Mouse).